Consider the following 353-residue polypeptide: Protein XRP2 (353 aa).

The interval 1 to 37 is disordered; that stretch reads MGCFFSKKAKRKRNSEEEQPQQDGEEPKQYSWDKREK. The N-myristoyl glycine moiety is linked to residue G2. A lipid anchor (S-palmitoyl cysteine) is attached at C3. Residues 25 to 37 are compositionally biased toward basic and acidic residues; that stretch reads EEPKQYSWDKREK. The region spanning 27 to 182 is the C-CAP/cofactor C-like domain; it reads PKQYSWDKRE…TWSNIHDFTP (156 aa). Residues 101-102 and 118-121 each bind GTP; these read GS and QQFR.

Belongs to the TBCC family. Myristoylated on Gly-2; which may be required for membrane targeting. Post-translationally, palmitoylated on Cys-3; which may be required for plasma membrane targeting.

The protein localises to the cell membrane. Acts as a GTPase-activating protein (GAP) for tubulin in concert with tubulin-specific chaperone C, but does not enhance tubulin heterodimerization. Acts as a GTPase-activating protein. May act as guanine nucleotide dissociation inhibitor towards ADP-ribosylation factor-like proteins. The sequence is that of Protein XRP2 (rp2) from Xenopus laevis (African clawed frog).